Consider the following 206-residue polypeptide: Insecticyanin-B (206 aa).

Positions 1 to 17 are cleaved as a signal peptide; that stretch reads MQRFLVFTIVAVATAAA. Disulfide bonds link C26–C136 and C60–C192.

Belongs to the calycin superfamily. Lipocalin family. In terms of assembly, homotetramer. In terms of tissue distribution, synthesized only in the caterpillars, apparently by the epidermis and secreted into the hemolymph. The protein is passed over from the larval hemolymph to that of pupae and adults and is sequestered in the eggs.

The protein localises to the secreted. This protein binds a chromophore: biliverdin IX, isomer gamma. Mixed with lipoprotein-bound carotenes, this blue protein provides hornworms with their green cryptic coloration which serves a camouflage. This chain is Insecticyanin-B (INSB), found in Manduca sexta (Tobacco hawkmoth).